The following is a 327-amino-acid chain: Methionine import ATP-binding protein MetN (327 aa).

The region spanning 3 to 239 (VELKNIEKIY…PKHAVTKELL (237 aa)) is the ABC transporter domain. 36–43 (GYSGAGKS) is a binding site for ATP.

Belongs to the ABC transporter superfamily. Methionine importer (TC 3.A.1.24) family. As to quaternary structure, the complex is composed of two ATP-binding proteins (MetN), two transmembrane proteins (MetI) and a solute-binding protein (MetQ).

It is found in the cell inner membrane. It carries out the reaction L-methionine(out) + ATP + H2O = L-methionine(in) + ADP + phosphate + H(+). The enzyme catalyses D-methionine(out) + ATP + H2O = D-methionine(in) + ADP + phosphate + H(+). Its function is as follows. Part of the ABC transporter complex MetNIQ involved in methionine import. Responsible for energy coupling to the transport system. The chain is Methionine import ATP-binding protein MetN from Helicobacter pylori (strain ATCC 700392 / 26695) (Campylobacter pylori).